The sequence spans 403 residues: Conserved oligomeric Golgi complex subunit 5 (403 aa).

The protein belongs to the COG5 family. As to quaternary structure, component of the conserved oligomeric Golgi (COG or Sec34/Sec35) complex which consists of eight different proteins COG1-COG8.

It is found in the golgi apparatus membrane. Acts as a component of the peripheral membrane COG complex that is involved in intra-Golgi protein trafficking. COG is located at the cis-Golgi, and regulates tethering of retrograde intra-Golgi vesicles and possibly a number of other membrane trafficking events. This chain is Conserved oligomeric Golgi complex subunit 5 (COG5), found in Saccharomyces cerevisiae (strain ATCC 204508 / S288c) (Baker's yeast).